Consider the following 271-residue polypeptide: MGNTTSERVSGERHGAKAARAEGGGHGPGKEHKIMVGSTDDPSVFSLPDSKLPGDKEFVPWQQDLDDSVKPTQQARPTVIRWSEGGKEVFISGSFNNWSTKIPLIKSHNDFVAILDLPEGEHQYKFFVDGQWVHDPSEPVVTSQLGTINNLIHVKKSDFEVFDALKLDSMESSETSCRDLSSSPPGPYGQEMYVFRSEERFKSPPILPPHLLQVILNKDTNISCDPALLPEPNHVMLNHLYALSTKDSVMVLSATHRYKKKYVTTLLYKPI.

The tract at residues 1-47 is disordered; the sequence is MGNTTSERVSGERHGAKAARAEGGGHGPGKEHKIMVGSTDDPSVFSL. Phosphoserine; by ULK1 is present on S38. T39 is modified (phosphothreonine; by ULK1). A Phosphoserine; by ULK1 modification is found at S68. 2 positions are modified to phosphoserine: S94 and S107. T147 carries the post-translational modification Phosphothreonine. Residues S157 and S169 each carry the phosphoserine modification. At S173 the chain carries Phosphoserine; by ULK1. Phosphoserine is present on S183.

It belongs to the 5'-AMP-activated protein kinase beta subunit family. AMPK is a heterotrimer of an alpha catalytic subunit (PRKAA1 or PRKAA2), a beta (PRKAB1 or PRKAB2) and a gamma non-catalytic subunits (PRKAG1, PRKAG2 or PRKAG3). Phosphorylated when associated with the catalytic subunit (PRKAA1 or PRKAA2). Phosphorylated by ULK1 and ULK2; leading to negatively regulate AMPK activity and suggesting the existence of a regulatory feedback loop between ULK1, ULK2 and AMPK.

Its function is as follows. Non-catalytic subunit of AMP-activated protein kinase (AMPK), an energy sensor protein kinase that plays a key role in regulating cellular energy metabolism. In response to reduction of intracellular ATP levels, AMPK activates energy-producing pathways and inhibits energy-consuming processes: inhibits protein, carbohydrate and lipid biosynthesis, as well as cell growth and proliferation. AMPK acts via direct phosphorylation of metabolic enzymes, and by longer-term effects via phosphorylation of transcription regulators. Also acts as a regulator of cellular polarity by remodeling the actin cytoskeleton; probably by indirectly activating myosin. Beta non-catalytic subunit acts as a scaffold on which the AMPK complex assembles, via its C-terminus that bridges alpha (PRKAA1 or PRKAA2) and gamma subunits (PRKAG1, PRKAG2 or PRKAG3). In Rattus norvegicus (Rat), this protein is 5'-AMP-activated protein kinase subunit beta-2 (Prkab2).